Reading from the N-terminus, the 173-residue chain is Regulatory protein RecX (173 aa).

The protein belongs to the RecX family.

Its subcellular location is the cytoplasm. Modulates RecA activity. This chain is Regulatory protein RecX, found in Mycobacterium avium (strain 104).